The primary structure comprises 354 residues: Arginase-2, mitochondrial (354 aa).

A mitochondrion-targeting transit peptide spans 1–22 (MFLRSSASRLLHGQIPCVLTRS). The Mn(2+) site is built by His-120, Asp-143, His-145, and Asp-147. Substrate is bound by residues 145–149 (HADIN), 156–158 (SGN), and Glu-202. The Mn(2+) site is built by Asp-251 and Asp-253. 2 residues coordinate substrate: Thr-265 and Glu-296.

The protein belongs to the arginase family. Homotrimer. Requires Mn(2+) as cofactor.

Its subcellular location is the mitochondrion. It catalyses the reaction L-arginine + H2O = urea + L-ornithine. The protein operates within nitrogen metabolism; urea cycle; L-ornithine and urea from L-arginine: step 1/1. Functionally, may play a role in the regulation of extra-urea cycle arginine metabolism and also in down-regulation of nitric oxide synthesis. Extrahepatic arginase functions to regulate L-arginine bioavailability to nitric oxid synthase (NOS). Arginine metabolism is a critical regulator of innate and adaptive immune responses. Seems to be involved in negative regulation of the survival capacity of activated CD4(+) and CD8(+) T cells. May suppress inflammation-related signaling in asthmatic airway epithelium. May contribute to the immune evasion of H.pylori by restricting M1 macrophage activation and polyamine metabolism. May play a role in promoting prenatal immune suppression. Regulates RPS6KB1 signaling, which promotes endothelial cell senescence and inflammation and implicates NOS3/eNOS dysfunction. Can inhibit endothelial autophagy independently of its enzymatic activity implicating mTORC2 signaling. Involved in vascular smooth muscle cell senescence and apoptosis independently of its enzymatic activity. The chain is Arginase-2, mitochondrial (Arg2) from Mus musculus (Mouse).